Reading from the N-terminus, the 305-residue chain is Ornithine carbamoyltransferase (305 aa).

Carbamoyl phosphate-binding positions include 48-51 (STRT), arginine 99, and 126-129 (HPCQ). Residues asparagine 157, aspartate 222, and 226–227 (SM) each bind L-ornithine. Carbamoyl phosphate contacts are provided by residues 262–263 (CL) and arginine 290.

It belongs to the aspartate/ornithine carbamoyltransferase superfamily. OTCase family.

Its subcellular location is the cytoplasm. The catalysed reaction is carbamoyl phosphate + L-ornithine = L-citrulline + phosphate + H(+). It functions in the pathway amino-acid biosynthesis; L-arginine biosynthesis; L-arginine from L-ornithine and carbamoyl phosphate: step 1/3. Reversibly catalyzes the transfer of the carbamoyl group from carbamoyl phosphate (CP) to the N(epsilon) atom of ornithine (ORN) to produce L-citrulline. This is Ornithine carbamoyltransferase (argF) from Methanocaldococcus jannaschii (strain ATCC 43067 / DSM 2661 / JAL-1 / JCM 10045 / NBRC 100440) (Methanococcus jannaschii).